Consider the following 124-residue polypeptide: Ribonuclease P protein component (124 aa).

This sequence belongs to the RnpA family. In terms of assembly, consists of a catalytic RNA component (M1 or rnpB) and a protein subunit.

The enzyme catalyses Endonucleolytic cleavage of RNA, removing 5'-extranucleotides from tRNA precursor.. Functionally, RNaseP catalyzes the removal of the 5'-leader sequence from pre-tRNA to produce the mature 5'-terminus. It can also cleave other RNA substrates such as 4.5S RNA. The protein component plays an auxiliary but essential role in vivo by binding to the 5'-leader sequence and broadening the substrate specificity of the ribozyme. In Synechocystis sp. (strain ATCC 27184 / PCC 6803 / Kazusa), this protein is Ribonuclease P protein component.